An 884-amino-acid polypeptide reads, in one-letter code: MLKLWKVVRPARQLELHRLILLLIAFSLGSMGFLAYYVSTSPKAKEPLPLPLGDCSSSGAAGGPGPVRPPVPPRPPRPPETARTEPVVLVFVESAYSQLGQEIVAILESSRFRYSTELAPGRGDMPTLTDHTRGRYVLVIYENLLKYVNLDAWSRELLDRYCVEYGVGIIGFFRAHEHSLLSAQLKGFPLFLHSNLGLRDYQVNPTAPLLHLTRPSRLEPGPLPGDDWTIFQSNHRTYEPVLLGSLRPAEPPVPGPVARRARLPTVVQDLGVHDGIQRVLFGHGLSFWLHKLVFRDAGGYLTGKGLLWDLDRYILVDIDDIFVGKEGTRMKVADVEALLTTQNKLRTLVPNFTFNLGFSGKFYHTGTEEEDAGDDMLLNHRREFWWFPHMWSHMQPHLFHNRSVLADQMRLNKQFALEHGIPTDLGYAVAPHHSGVYPIHTQLYEAWKSVWGIQVTSTEEYPHLRPARYRRGFIHNGIMVLPRQTCGLFTHTIFYNEYPGGSRELDRSIRGGELFLTVLLNPISIFMTHLSNYGNDRLGLYTFESLVRFLQCWTSLRLQTLPPVPLGRKYFDLFPQERSPLWQNPCDDKRHKDIWSKEKTCDRLPKFLIVGPQKTGTTAIHFFLSLHPAVTSSFPSPSTFEEIQFFNGPNYHKGIDWYMDFFPVPSNASTDFLFEKSATYFDSEVVPRRGAALLPRAKIITVLTNPADRAYSWYQHQRAHGDPVALNYTFYQVITASSQDPPALRSLQNRCLVPGYYSTHLQRWLTYYPSGQLLIVDGQELRTNPAASMEIIQKFLGITPFLNYTRTLRFDEDKGFWCQGLEGGKTRCLGKSKGRKYPDMDAESRLFLTDFFRNHNLELSKLLSRLGQPVPSWLREELQHSSSG.

The Cytoplasmic segment spans residues 1 to 18; sequence MLKLWKVVRPARQLELHR. The chain crosses the membrane as a helical; Signal-anchor for type II membrane protein span at residues 19–39; that stretch reads LILLLIAFSLGSMGFLAYYVS. At 40–884 the chain is on the lumenal side; that stretch reads TSPKAKEPLP…REELQHSSSG (845 aa). The interval 41–598 is heparan sulfate N-deacetylase 2; that stretch reads SPKAKEPLPL…KRHKDIWSKE (558 aa). Residues 49–82 form a disordered region; that stretch reads PLPLGDCSSSGAAGGPGPVRPPVPPRPPRPPETA. Residues 66–79 are compositionally biased toward pro residues; that stretch reads PVRPPVPPRPPRPP. Residues Asn351 and Asn401 are each glycosylated (N-linked (GlcNAc...) asparagine). Residues 599 to 884 are heparan sulfate N-sulfotransferase 2; it reads KTCDRLPKFL…REELQHSSSG (286 aa). Catalysis depends on Lys614, which acts as the For sulfotransferase activity. 614-618 serves as a coordination point for 3'-phosphoadenylyl sulfate; that stretch reads KTGTT. Asn667 carries N-linked (GlcNAc...) asparagine glycosylation. A 3'-phosphoadenylyl sulfate-binding site is contributed by Ser712. 2 N-linked (GlcNAc...) asparagine glycosylation sites follow: Asn727 and Asn803. Cys818 and Cys828 are oxidised to a cystine. 833–837 serves as a coordination point for 3'-phosphoadenylyl sulfate; the sequence is KGRKY.

The protein belongs to the sulfotransferase 1 family. NDST subfamily. Monomer.

It is found in the golgi apparatus membrane. It catalyses the reaction alpha-D-glucosaminyl-[heparan sulfate](n) + 3'-phosphoadenylyl sulfate = N-sulfo-alpha-D-glucosaminyl-[heparan sulfate](n) + adenosine 3',5'-bisphosphate + 2 H(+). It functions in the pathway glycan metabolism; heparan sulfate biosynthesis. The protein operates within glycan metabolism; heparin biosynthesis. Functionally, essential bifunctional enzyme that catalyzes both the N-deacetylation and the N-sulfation of glucosamine (GlcNAc) of the glycosaminoglycan in heparan sulfate. Modifies the GlcNAc-GlcA disaccharide repeating sugar backbone to make N-sulfated heparosan, a prerequisite substrate for later modifications in heparin biosynthesis. Plays a role in determining the extent and pattern of sulfation of heparan sulfate. Required for the exosomal release of SDCBP, CD63 and syndecan. The polypeptide is Bifunctional heparan sulfate N-deacetylase/N-sulfotransferase 2 (NDST2) (Bos taurus (Bovine)).